The sequence spans 180 residues: Cell number regulator 7 (180 aa).

The helical transmembrane segment at 80–102 threads the bilayer; sequence AAAGAIYTLLACFTGFQCHWIYS.

The protein belongs to the cornifelin family. In terms of tissue distribution, expressed in roots, leaves, immature ears and silks. Detected preferentially in silks.

The protein localises to the membrane. The chain is Cell number regulator 7 (CNR7) from Zea mays (Maize).